A 328-amino-acid polypeptide reads, in one-letter code: Cytochrome c biogenesis protein CcsA (328 aa).

Transmembrane regions (helical) follow at residues Ile-13–Leu-33, Gly-46–Gly-66, Leu-73–Phe-93, Leu-101–Leu-121, Met-146–Ile-166, Ile-234–Asn-254, Trp-263–Ile-283, and Ala-295–Leu-315.

Belongs to the CcmF/CycK/Ccl1/NrfE/CcsA family. As to quaternary structure, may interact with Ccs1.

The protein resides in the plastid. The protein localises to the chloroplast thylakoid membrane. Its function is as follows. Required during biogenesis of c-type cytochromes (cytochrome c6 and cytochrome f) at the step of heme attachment. This is Cytochrome c biogenesis protein CcsA from Arabis hirsuta (Hairy rock-cress).